Reading from the N-terminus, the 212-residue chain is 2-dehydro-3-deoxy-phosphogluconate aldolase (212 aa).

Residue E45 is the Proton acceptor of the active site. Pyruvate is bound by residues R49, T73, and K133. K133 (schiff-base intermediate with substrate) is an active-site residue.

This sequence belongs to the KHG/KDPG aldolase family. In terms of assembly, homotrimer.

It is found in the cytoplasm. It carries out the reaction 2-dehydro-3-deoxy-6-phospho-D-gluconate = D-glyceraldehyde 3-phosphate + pyruvate. Its pathway is carbohydrate acid metabolism; 2-dehydro-3-deoxy-D-gluconate degradation; D-glyceraldehyde 3-phosphate and pyruvate from 2-dehydro-3-deoxy-D-gluconate: step 2/2. In terms of biological role, involved in the degradation of glucose via the Entner-Doudoroff pathway. Catalyzes the reversible, stereospecific retro-aldol cleavage of 2-keto-3-deoxy-6-phosphogluconate (KDPG) to pyruvate and D-glyceraldehyde-3-phosphate. The sequence is that of 2-dehydro-3-deoxy-phosphogluconate aldolase (eda) from Haemophilus influenzae (strain ATCC 51907 / DSM 11121 / KW20 / Rd).